Here is a 377-residue protein sequence, read N- to C-terminus: UPF0754 membrane protein GK0639 (377 aa).

2 helical membrane passes run 7-27 (LLFMVAVGALIGGVTNFIAIV) and 357-377 (YLGALLGGLIGAVQGVIGLWL).

This sequence belongs to the UPF0754 family.

Its subcellular location is the cell membrane. The chain is UPF0754 membrane protein GK0639 from Geobacillus kaustophilus (strain HTA426).